The chain runs to 305 residues: Mitochondrial thiamine pyrophosphate carrier 1 (305 aa).

The next 6 helical transmembrane spans lie at 16-32, 84-100, 122-142, 169-193, 213-229, and 270-287; these read VSPY…GAVA, ILYV…YSSI, LVSG…FDLL, GFTG…LMFW, ICGF…TFPL, and GFGI…VSLF. Solcar repeat units follow at residues 16–103, 116–201, and 206–295; these read VSPY…ISRW, PSSA…VRET, and DIPF…SLAA.

Belongs to the mitochondrial carrier (TC 2.A.29) family.

It localises to the mitochondrion inner membrane. Functionally, mitochondrial transporter that mediates uptake of thiamine pyrophosphate (ThPP) into mitochondria. This is Mitochondrial thiamine pyrophosphate carrier 1 (TPC1) from Scheffersomyces stipitis (strain ATCC 58785 / CBS 6054 / NBRC 10063 / NRRL Y-11545) (Yeast).